The following is a 397-amino-acid chain: MNYAYPDEKGHYGIYGGRYVPETLMQSVLELEEAYKEAMEDEEFQKELNHYLKTYVGRETPLYFAENMTEYCGGAKIYLKREDLNHTGAHKINNTIGQALLAVRMGKKKVVAETGAGQHGVATATVCALLGLECVIFMGEEDVRRQKLNVFRMELLGAKVESVAAGSGTLKDAVNEALRYWVSHVHDTHYIMGSVLGPHPFPQIVRDFQSVIGNETKKQYEALEGKLPEAVVACIGGGSNAMGMFYPFVHDEEVALYGVEAAGKGVHTEKHAATLTKGSVGVLHGSMMYLLQNEEGQIQEAHSISAGLDYPGVGPEHSLLKDIGRVSYHSITDDEALEAFQLLTKKEGIIPALESSHAVAYALKLAPQMKKDEGLVICLSGRGDKDVESIKRYMEEV.

N6-(pyridoxal phosphate)lysine is present on K91.

This sequence belongs to the TrpB family. Tetramer of two alpha and two beta chains. Requires pyridoxal 5'-phosphate as cofactor.

It carries out the reaction (1S,2R)-1-C-(indol-3-yl)glycerol 3-phosphate + L-serine = D-glyceraldehyde 3-phosphate + L-tryptophan + H2O. It functions in the pathway amino-acid biosynthesis; L-tryptophan biosynthesis; L-tryptophan from chorismate: step 5/5. Its function is as follows. The beta subunit is responsible for the synthesis of L-tryptophan from indole and L-serine. In Bacillus cereus (strain AH187), this protein is Tryptophan synthase beta chain.